The primary structure comprises 425 residues: Formyl-CoA:oxalate CoA-transferase (425 aa).

Residues 17-18 (QS), Arg38, 72-75 (LDTK), 96-98 (NFG), Arg104, and 136-139 (KVYE) contribute to the CoA site. Asp168 functions as the Nucleophile in the catalytic mechanism. 247–249 (GGQ) contributes to the substrate binding site.

The protein belongs to the CoA-transferase III family. Frc subfamily. Homodimer.

It carries out the reaction formyl-CoA + oxalate = oxalyl-CoA + formate. Its pathway is metabolic intermediate degradation; oxalate degradation; CO(2) and formate from oxalate: step 1/2. In terms of biological role, involved in the catabolism of oxalate and in the adapatation to low pH via the induction of the oxalate-dependent acid tolerance response (ATR). Catalyzes the transfer of the CoA moiety from formyl-CoA to oxalate. The protein is Formyl-CoA:oxalate CoA-transferase of Rhodopseudomonas palustris (strain ATCC BAA-98 / CGA009).